Here is a 130-residue protein sequence, read N- to C-terminus: Small ribosomal subunit protein uS8 (130 aa).

This sequence belongs to the universal ribosomal protein uS8 family. In terms of assembly, part of the 30S ribosomal subunit. Contacts proteins S5 and S12.

In terms of biological role, one of the primary rRNA binding proteins, it binds directly to 16S rRNA central domain where it helps coordinate assembly of the platform of the 30S subunit. This Marinomonas sp. (strain MWYL1) protein is Small ribosomal subunit protein uS8.